A 473-amino-acid polypeptide reads, in one-letter code: Phosphatidylserine synthase 1 (473 aa).

An N-acetylalanine modification is found at A2. At 2–35 (ASCVGSRTLSKDDVNYKMHFRMINEQQVEDITID) the chain is on the cytoplasmic side. Residues 36–56 (FFYRPHTITLLSFTIVSLMYF) traverse the membrane as a helical segment. Over 57 to 72 (AFTRDDSVPEDNIWRG) the chain is Lumenal. Residues 73–93 (ILSVIFFFLIISVLAFPNGPF) traverse the membrane as a helical segment. Over 94–102 (TRPHPALWR) the chain is Cytoplasmic. The helical transmembrane segment at 103-123 (MVFGLSVLYFLFLVFLLFLNF) threads the bilayer. At 124-186 (EQVKSLMYWL…AMKALLIRSY (63 aa)) the chain is on the lumenal side. Residues 187 to 207 (GLCWTISITWELTELFFMHLL) traverse the membrane as a helical segment. Residues 208–216 (PNFAECWWD) lie on the Cytoplasmic side of the membrane. Residues 217–237 (QVILDILLCNGGGIWLGMVVC) traverse the membrane as a helical segment. At 238 to 286 (RFLEMRTYHWASFKDIHTTTGKIKRAVLQFTPASWTYVRWFDPKSSFQR) the chain is on the lumenal side. Residues 287–307 (VAGIYLFMIIWQLTELNTFFL) form a helical membrane-spanning segment. Residues 308 to 319 (KHIFVFQASHPL) are Cytoplasmic-facing. The chain crosses the membrane as a helical span at residues 320–342 (SWCRILFIGGITAPTVRQYYAYL). The Lumenal portion of the chain corresponds to 343-355 (TDTQCKRVGTQCW). A helical transmembrane segment spans residues 356–376 (VFGVIGFLEAIVCIKFGQDLF). The Cytoplasmic segment spans residues 377–383 (SKTQILY). A helical membrane pass occupies residues 384 to 404 (VVLWLLCVAFTTFLCLYGMVW). Over 405–473 (YAEHYGHREK…SKVTNGVGKK (69 aa)) the chain is Lumenal. Phosphoserine occurs at positions 417, 425, and 454. The segment at 427–473 (DISWPHGKGSKGSEDGPHKHPGNSESHSSRRRNRHSKSKVTNGVGKK) is disordered. Residues 455 to 464 (SRRRNRHSKS) show a composition bias toward basic residues.

This sequence belongs to the phosphatidyl serine synthase family.

The protein resides in the endoplasmic reticulum membrane. The catalysed reaction is a 1,2-diacyl-sn-glycero-3-phosphoethanolamine + L-serine = a 1,2-diacyl-sn-glycero-3-phospho-L-serine + ethanolamine. It catalyses the reaction a 1,2-diacyl-sn-glycero-3-phosphocholine + L-serine = a 1,2-diacyl-sn-glycero-3-phospho-L-serine + choline. It participates in phospholipid metabolism; phosphatidylserine biosynthesis. Catalyzes a base-exchange reaction in which the polar head group of phosphatidylethanolamine (PE) or phosphatidylcholine (PC) is replaced by L-serine. Catalyzes mainly the conversion of phosphatidylcholine but also converts, in vitro and to a lesser extent, phosphatidylethanolamine. This is Phosphatidylserine synthase 1 (PTDSS1) from Bos taurus (Bovine).